Consider the following 352-residue polypeptide: Uroporphyrinogen decarboxylase (352 aa).

Substrate-binding positions include 26-30 (RQAGR), Asp76, Tyr153, Ser208, and His323.

It belongs to the uroporphyrinogen decarboxylase family. In terms of assembly, homodimer.

Its subcellular location is the cytoplasm. It catalyses the reaction uroporphyrinogen III + 4 H(+) = coproporphyrinogen III + 4 CO2. It functions in the pathway porphyrin-containing compound metabolism; protoporphyrin-IX biosynthesis; coproporphyrinogen-III from 5-aminolevulinate: step 4/4. Its function is as follows. Catalyzes the decarboxylation of four acetate groups of uroporphyrinogen-III to yield coproporphyrinogen-III. This is Uroporphyrinogen decarboxylase from Prochlorococcus marinus (strain NATL1A).